The primary structure comprises 504 residues: Pyrichalasin C-7 hydroxylase (504 aa).

The first 17 residues, 1 to 17, serve as a signal peptide directing secretion; it reads MLNSAACIVLAITAVLG. Residue C449 coordinates heme.

The protein belongs to the cytochrome P450 family. Requires heme as cofactor.

The protein operates within mycotoxin biosynthesis. In terms of biological role, cytochrome P450 monooxygenase; part of the gene cluster that mediates the biosynthesis of the mycotoxin pyrichalasin H, a tyrosine-derived cytochalasan that inhibits the growth of rice seedlings, but also inhibits lymphocyte capping and actin polymerization and alters cell morphology. Pyrichalasin H is indicated as the responsible agent for the genus-specific pathogenicity of M.grisea toward crabgrass. The first step in the pathway is catalyzed by the O-methyltransferase pyiA which methylates free tyrosine to generate the precursor O-methyltyrosine. The hybrid PKS-NRPS pyiS, assisted by the enoyl reductase pyiC, are responsible for fusion of the O-methyltyrosine precursor and the polyketide backbone. The polyketide synthase module (PKS) of pyiS is responsible for the synthesis of the polyketide backbone and the downstream nonribosomal peptide synthetase (NRPS) amidates the carboxyl end of the polyketide with the O-methyltyrosine precursor. As the NRPS A-domain demonstrates substrate tolerance, pyiS can also use phenylalanine, tyrosine and even para-chlorophenylalanine as amino acid precursor, which leads to the production of novel cytochalasans, including halogenated cytochalasans. Because pyiS lacks a designated enoylreductase (ER) domain, the required activity is provided the enoyl reductase pyiC. Reduction by the hydrolyase pyiE leads to 1,5-dihydropyrrolone, which is substrate for dehydration and intra-molecular Diels-Alder cyclization by the Diels-Alderase pyiF to yield the required isoindolone-fused macrocycle. The tailoring cytochrome P450 monooxygenases piyD and piyG catalyze the hydroxylation at C-18 and C-7, respectivily, whereas the short-chain dehydrogenase/reductase pyiH reduces the carbonyl at C-21 in preparation for the transfer of an acetyl group by the acetyltransferase pyiB. These 3 reactions whose order is not clear yet, lead to the production of O-methylpyrichalasin J, a deacetylated pyrichalasin H. Finally, pyiB to converts O-methylpyrichalasin J into the final product pyrichalasin H via acetylation of C-21. In Pyricularia grisea (Crabgrass-specific blast fungus), this protein is Pyrichalasin C-7 hydroxylase.